Here is a 348-residue protein sequence, read N- to C-terminus: D-fructose 1,6-bisphosphatase class 2/sedoheptulose 1,7-bisphosphatase 2 (348 aa).

Mn(2+)-binding residues include aspartate 33, glutamate 57, aspartate 97, and glutamate 100. Substrate-binding positions include 100–102 (EGT), tyrosine 131, 176–178 (RER), and 198–200 (DGD). Glutamate 225 serves as a coordination point for Mn(2+).

It belongs to the FBPase class 2 family. As to quaternary structure, homotetramer.

It catalyses the reaction beta-D-fructose 1,6-bisphosphate + H2O = beta-D-fructose 6-phosphate + phosphate. It carries out the reaction D-sedoheptulose 1,7-bisphosphate + H2O = D-sedoheptulose 7-phosphate + phosphate. It functions in the pathway carbohydrate biosynthesis; Calvin cycle. In terms of biological role, catalyzes the hydrolysis of fructose 1,6-bisphosphate (Fru 1,6-P2) and sedoheptulose 1,7-bisphosphate (Sed 1,7-P2) to fructose 6-phosphate and sedoheptulose 7-phosphate, respectively. This is D-fructose 1,6-bisphosphatase class 2/sedoheptulose 1,7-bisphosphatase 2 from Acaryochloris marina (strain MBIC 11017).